The sequence spans 1118 residues: Cytospin-A (1118 aa).

Disordered regions lie at residues 1–50 (MKKA…AALS), 75–175 (KKSN…DNQI), 294–324 (SLSP…GSVE), and 359–391 (SSDD…NASE). Composition is skewed to low complexity over residues 34–48 (APTG…AAAA), 80–90 (SSAAPSAPAPA), and 99–113 (KSST…RSTS). Residues 120 to 131 (SSTRERLRERTR) are compositionally biased toward basic and acidic residues. The segment covering 133 to 145 (NQSKKLPSVSQGA) has biased composition (polar residues). Over residues 158-171 (TATEGDIRMSKSKS) the composition is skewed to basic and acidic residues. Positions 168 to 281 (KSKSDNQISD…LNALGFSLEQ (114 aa)) form a coiled coil. Residues 294 to 304 (SLSPEITPGNQ) are compositionally biased toward polar residues. A compositionally biased stretch (low complexity) spans 359-373 (SSDDALDAPSSSESE). Phosphoserine occurs at positions 385, 386, and 390. Coiled-coil stretches lie at residues 395 to 450 (ACLT…MESL) and 488 to 808 (RYME…RGRV). Phosphoserine occurs at positions 869, 882, and 888. The tract at residues 916-999 (EHLLRTSSTS…STRSRIREER (84 aa)) is disordered. Over residues 947 to 957 (RSSEEMKRDIS) the composition is skewed to basic and acidic residues. Low complexity predominate over residues 972–992 (TTSPQLSLSSSPTASVTPSTR). The Calponin-homology (CH) domain occupies 1012 to 1117 (GSKRNALLKW…YVTAIYKYFE (106 aa)).

Belongs to the cytospin-A family. May interact with both microtubules and actin cytoskeleton.

The protein localises to the cytoplasm. The protein resides in the cytoskeleton. It is found in the spindle. Its subcellular location is the cell junction. It localises to the gap junction. Functionally, involved in cytokinesis and spindle organization. May play a role in actin cytoskeleton organization and microtubule stabilization and hence required for proper cell adhesion and migration. In Rattus norvegicus (Rat), this protein is Cytospin-A (Specc1l).